A 216-amino-acid chain; its full sequence is MSKIQLVAEAKLPTEFGIFRIVGFEFPDTQKEHVALVMGDINDDKPVLARIHSECLTGDALHSLKCDCGFQLATALRQISEAGRGVLIYHREEGRGIGLINKIRAYALQDQGLDTIEANLALGFAADERNFSVCADIFALLGVKQVRLLTNNPNKIETMKKSGINIVERVPLNVGENRYNTEYLDTKAKKMGHFIVHNNEQHLIACPHCQEEIPKK.

Arg50 to Glu54 contacts GTP. Zn(2+) is bound by residues Cys55, Cys66, and Cys68. Residues Gln71, Glu93–Arg95, and Thr115 contribute to the GTP site. Asp127 acts as the Proton acceptor in catalysis. The Nucleophile role is filled by Arg129. GTP is bound by residues Thr150 and Lys155.

This sequence belongs to the GTP cyclohydrolase II family. It depends on Zn(2+) as a cofactor.

It catalyses the reaction GTP + 4 H2O = 2,5-diamino-6-hydroxy-4-(5-phosphoribosylamino)-pyrimidine + formate + 2 phosphate + 3 H(+). It participates in cofactor biosynthesis; riboflavin biosynthesis; 5-amino-6-(D-ribitylamino)uracil from GTP: step 1/4. Catalyzes the conversion of GTP to 2,5-diamino-6-ribosylamino-4(3H)-pyrimidinone 5'-phosphate (DARP), formate and pyrophosphate. The polypeptide is GTP cyclohydrolase-2 (Histophilus somni (strain 129Pt) (Haemophilus somnus)).